The primary structure comprises 161 residues: Putative pre-16S rRNA nuclease (161 aa).

Belongs to the YqgF nuclease family.

The protein localises to the cytoplasm. Functionally, could be a nuclease involved in processing of the 5'-end of pre-16S rRNA. The sequence is that of Putative pre-16S rRNA nuclease from Rhodospirillum rubrum (strain ATCC 11170 / ATH 1.1.1 / DSM 467 / LMG 4362 / NCIMB 8255 / S1).